A 306-amino-acid chain; its full sequence is Reaction center protein M chain (306 aa).

3 consecutive transmembrane segments (helical) span residues Gly-53–Asn-79, Gly-111–Lys-140, and Thr-143–Gly-168. Residues His-181 and His-201 each coordinate (7R,8Z)-bacteriochlorophyll b. Residues Asn-198–Ser-226 traverse the membrane as a helical segment. The Fe cation site is built by His-218 and Glu-233. Residue Trp-251 coordinates a ubiquinone. A helical transmembrane segment spans residues Thr-260–Thr-286. His-265 is a binding site for Fe cation.

This sequence belongs to the reaction center PufL/M/PsbA/D family. Reaction center is composed of four bacteriochlorophylls, two bacteriopheophytins, two ubiquinones, one iron, and three highly hydrophobic polypeptide chains (designated L, M, and H).

Its subcellular location is the cellular chromatophore membrane. In terms of biological role, the reaction center is a membrane-bound complex that mediates the initial photochemical event in the electron transfer process of photosynthesis. The protein is Reaction center protein M chain (pufM) of Rhodospirillum rubrum.